Consider the following 279-residue polypeptide: Inorganic pyrophosphatase (279 aa).

Position 100 (R100) interacts with diphosphate. Residues D132, D137, and D169 each contribute to the Mg(2+) site.

Belongs to the PPase family. Mg(2+) is required as a cofactor.

The enzyme catalyses diphosphate + H2O = 2 phosphate + H(+). The chain is Inorganic pyrophosphatase (ppa1) from Dictyostelium discoideum (Social amoeba).